A 352-amino-acid chain; its full sequence is Protein AMBP (352 aa).

An N-terminal signal peptide occupies residues 1–19 (MRSLSGLLLLLTACLAVNA). The 3-hydroxy-L-kynurenine site is built by Cys-53 and Lys-111. Residues Cys-91 and Cys-188 are joined by a disulfide bond. A glycan (N-linked (GlcNAc...) asparagine) is linked at Asn-115. Positions 137 and 149 each coordinate 3-hydroxy-L-kynurenine. A glycan (O-linked (Xyl...) (chondroitin sulfate) serine) is linked at Ser-215. Residues Asn-223 and Asn-250 are each glycosylated (N-linked (GlcNAc...) asparagine). Intrachain disulfides connect Cys-231/Cys-281, Cys-240/Cys-264, Cys-256/Cys-277, Cys-287/Cys-337, Cys-296/Cys-320, and Cys-312/Cys-333. BPTI/Kunitz inhibitor domains follow at residues 231 to 281 (CQLD…LQTC) and 287 to 337 (CNLP…KEYC).

In the N-terminal section; belongs to the calycin superfamily. Lipocalin family. As to quaternary structure, monomer. Homodimer. In plasma, it occurs as a monomer or dimer and in covalently-linked complexes with immunoglobulin A (IgA), ALB/albumin and F2/prothrombin. Chromophore-bound alpha-1-microglobulin interacts with the constant region of immunoglobulin A. Chromophore-bound alpha-1-microglobulin interacts with ALB with molar ratio 2:1 and 1:1; this interaction does not prevent fatty acid binding to ALB. Interacts with F2/prothrombin (via N-terminus) with molar ratio 2:1 and 1:1; this interaction does not prevent the activation of prothrombin to thrombin. Interacts with NDUFAB1, a subunit of mitochondrial complex I. Interacts with FN1. In terms of assembly, I-alpha-I plasma protease inhibitors are assembled from one or two heavy chains (HC) and one light chain, bikunin. Inter-alpha-inhibitor (I-alpha-I) is composed of ITIH1/HC1, ITIH2/HC2 and bikunin, and pre-alpha-inhibitor (P-alpha-I) of ITIH3/HC3 and bikunin. Interacts with TNFAIP6 (via Link domain). Monomer. Also occurs as a complex with tryptase in mast cells. The precursor is proteolytically processed into separately functioning proteins. Post-translationally, 3-hydroxykynurenine, an oxidized tryptophan metabolite that is common in biological fluids, reacts with Cys-53, Lys-111, Lys-137, and Lys-149 to form heterogeneous polycyclic chromophores including hydroxanthommatin. The reaction by alpha-1-microglobulin is autocatalytic; the human protein forms chromophore even when expressed in insect and bacterial cells. The chromophore can react with accessible cysteines forming non-reducible thioether cross-links with other molecules of alpha-1-microglobulin or with other proteins such as Ig alpha-1 chain C region 'Cys-352'. In terms of processing, heavy chains are interlinked with bikunin via a chondroitin 4-sulfate bridge to the C-terminal aspartate. Proteolytically cleaved by PRSS3 at Kunitz domain 2. As to expression, expressed by the liver and secreted in plasma.

The protein resides in the secreted. It is found in the endoplasmic reticulum. Its subcellular location is the cytoplasm. The protein localises to the cytosol. It localises to the cell membrane. The protein resides in the nucleus membrane. It is found in the mitochondrion inner membrane. Its subcellular location is the extracellular space. The protein localises to the extracellular matrix. Antioxidant and tissue repair protein with reductase, heme-binding and radical-scavenging activities. Removes and protects against harmful oxidants and repairs macromolecules in intravascular and extravascular spaces and in intracellular compartments. Intravascularly, plays a regulatory role in red cell homeostasis by preventing heme- and reactive oxygen species-induced cell damage. Binds and degrades free heme to protect fetal and adult red blood cells from hemolysis. Reduces extracellular methemoglobin, a Fe3+ (ferric) form of hemoglobin that cannot bind oxygen, back to the Fe2+ (ferrous) form deoxyhemoglobin, which has oxygen-carrying potential. Upon acute inflammation, inhibits oxidation of low-density lipoprotein particles by MPO and limits vascular damage. Extravascularly, protects from oxidation products formed on extracellular matrix structures and cell membranes. Catalyzes the reduction of carbonyl groups on oxidized collagen fibers and preserves cellular and extracellular matrix ultrastructures. Importantly, counteracts the oxidative damage at blood-placenta interface, preventing leakage of free fetal hemoglobin into the maternal circulation. Intracellularly, has a role in maintaining mitochondrial redox homeostasis. Bound to complex I of the respiratory chain of mitochondria, may scavenge free radicals and preserve mitochondrial ATP synthesis. Protects renal tubule epithelial cells from heme-induced oxidative damage to mitochondria. Reduces cytochrome c from Fe3+ (ferric) to the Fe2+ (ferrous) state through formation of superoxide anion radicals in the presence of ascorbate or NADH/NADPH electron donor cofactors, ascorbate being the preferred cofactor. Has a chaperone role in facilitating the correct folding of bikunin in the endoplasmic reticulum compartment. Its function is as follows. Kunitz-type serine protease inhibitor and structural component of extracellular matrix with a role in extracellular space remodeling and cell adhesion. Among others, has antiprotease activity toward kallikrein, a protease involved in airway inflammation; inhibits GZMK/granzyme, a granule-stored serine protease involved in NK and T cell cytotoxic responses; and inhibits PLG/plasmin, a protease required for activation of matrix metalloproteinases. As part of I-alpha-I complex, provides for the heavy chains to be transferred from I-alpha-I complex to hyaluronan in the presence of TNFAIP6, in a dynamic process that releases free bikunin and remodels extracellular matrix proteoglycan structures. Free bikunin, but not its heavy chain-bound form, acts as a potent protease inhibitor in airway secretions. Part of hyaluronan-rich extracellular matrix that surrounds oocyte during cumulus oophorus expansion, an indispensable process for proper ovulation. Also inhibits calcium oxalate crystallization. Functionally, kunitz-type serine protease inhibitor. Has high catalytic efficiency for F10/blood coagulation factor Xa and may act as an anticoagulant by inhibiting prothrombin activation. Inhibits trypsin and mast cell CMA1/chymase and tryptase proteases. The sequence is that of Protein AMBP (AMBP) from Bos taurus (Bovine).